Here is a 297-residue protein sequence, read N- to C-terminus: Formylmethanofuran--tetrahydromethanopterin formyltransferase (297 aa).

The protein belongs to the FTR family. As to quaternary structure, homotetramer.

The protein resides in the cytoplasm. The catalysed reaction is N-formylmethanofuran + 5,6,7,8-tetrahydromethanopterin + H(+) = N(5)-formyl-5,6,7,8-tetrahydromethanopterin + methanofuran. Its pathway is one-carbon metabolism; methanogenesis from CO(2); 5,10-methenyl-5,6,7,8-tetrahydromethanopterin from CO(2): step 2/3. In terms of biological role, catalyzes the reversible transfer of a formyl group from formylmethanofuran (formyl-MFR) to tetrahydromethanopterin (H(4)MPT) to produce 5-formyl tetrahydromethanopterin (5-formyl-H(4)MPT) and methanofuran (MFR). In Methanothermus fervidus (strain ATCC 43054 / DSM 2088 / JCM 10308 / V24 S), this protein is Formylmethanofuran--tetrahydromethanopterin formyltransferase.